Consider the following 396-residue polypeptide: Ribosomal RNA large subunit methyltransferase I (396 aa).

The 80-residue stretch at 2-81 (SVRLVLAKGR…ESIDIAFFTR (80 aa)) folds into the PUA domain.

It belongs to the methyltransferase superfamily. RlmI family.

Its subcellular location is the cytoplasm. It carries out the reaction cytidine(1962) in 23S rRNA + S-adenosyl-L-methionine = 5-methylcytidine(1962) in 23S rRNA + S-adenosyl-L-homocysteine + H(+). In terms of biological role, specifically methylates the cytosine at position 1962 (m5C1962) of 23S rRNA. This is Ribosomal RNA large subunit methyltransferase I from Escherichia coli (strain SMS-3-5 / SECEC).